Reading from the N-terminus, the 179-residue chain is Large ribosomal subunit protein uL6 (179 aa).

It belongs to the universal ribosomal protein uL6 family. In terms of assembly, part of the 50S ribosomal subunit.

Its function is as follows. This protein binds to the 23S rRNA, and is important in its secondary structure. It is located near the subunit interface in the base of the L7/L12 stalk, and near the tRNA binding site of the peptidyltransferase center. This chain is Large ribosomal subunit protein uL6, found in Geobacter metallireducens (strain ATCC 53774 / DSM 7210 / GS-15).